A 120-amino-acid polypeptide reads, in one-letter code: Large ribosomal subunit protein uL18 (120 aa).

It belongs to the universal ribosomal protein uL18 family. Part of the 50S ribosomal subunit; part of the 5S rRNA/L5/L18/L25 subcomplex. Contacts the 5S and 23S rRNAs.

Functionally, this is one of the proteins that bind and probably mediate the attachment of the 5S RNA into the large ribosomal subunit, where it forms part of the central protuberance. The sequence is that of Large ribosomal subunit protein uL18 from Brucella suis biovar 1 (strain 1330).